Here is a 462-residue protein sequence, read N- to C-terminus: MADGEEPEKKRRRIEELLAEKMAVDGGCGDTGDWEGRWNHVKKFLERSGPFTHPDFEPSTESLQFLLDTCKVLVIGAGGLGCELLKNLALSGFRQIHVIDMDTIDVSNLNRQFLFRPKDVGRPKAEVAAEFLNDRVPNCNVVPHFNKIQDFNDTFYRQFHIIVCGLDSIIARRWINGMLISLLNYEDGVLDPSSIVPLIDGGTEGFKGNARVILPGMTACIECTLELYPPQVNFPMCTIASMPRLPEHCIEYVRMLQWPKEQPFGDGVPLDGDDPEHIQWIFQKSIERASQYNIRGVTYRLTQGVVKRIIPAVASTNAVIAAVCATEVFKIATSAYIPLNNYLVFNDVDGLYTYTFEAERKENCPACSQLPQNIQFSPSAKLQEVLDYLTNSASLQMKSPAITATLEGKNRTLYLQSVTSIEERTRPNLSKTLKELGLVDGQELAVADVTTPQTVLFKLHFT.

Ala-2 carries the post-translational modification N-acetylalanine. The tract at residues 53–70 (HPDFEPSTESLQFLLDTC) is interaction with UBE2M N-terminus. ATP contacts are provided by residues 100-124 (DMDT…GRPK) and 148-171 (IQDF…SIIA). Interaction with UBE2M N-terminus stretches follow at residues 157-161 (RQFHI) and 192-217 (PSSI…LPGM). The interval 227 to 229 (LYP) is interaction with NEDD8. Catalysis depends on Cys-237, which acts as the Glycyl thioester intermediate. 2 interaction with NAE1 regions span residues 242–248 (MPRLPEH) and 292–295 (YNIR). Positions 331-338 (IATSAYIP) are interaction with UBE2M N-terminus. An interaction with NEDD8 region spans residues 352–357 (YTYTFE). The interval 368–462 (SQLPQNIQFS…QTVLFKLHFT (95 aa)) is interaction with UBE2M core domain.

The protein belongs to the ubiquitin-activating E1 family. UBA3 subfamily. Heterodimer of UBA3 and NAE1. Interacts with NEDD8, UBE2F and UBE2M. Binds ESR1 and ESR2 with bound steroid ligand. Interacts with TBATA.

The catalysed reaction is ATP + [NEDD8 protein] + [E1 NEDD8-activating enzyme]-L-cysteine = AMP + diphosphate + [E1 NEDD8-activating enzyme]-S-[NEDD8 protein]-yl-L-cysteine.. It participates in protein modification; protein neddylation. Binding of TP53BP2 to the regulatory subunit NAE1 decreases activity. Its function is as follows. Catalytic subunit of the dimeric UBA3-NAE1 E1 enzyme. E1 activates NEDD8 by first adenylating its C-terminal glycine residue with ATP, thereafter linking this residue to the side chain of the catalytic cysteine, yielding a NEDD8-UBA3 thioester and free AMP. E1 finally transfers NEDD8 to the catalytic cysteine of UBE2M. Down-regulates steroid receptor activity. Necessary for cell cycle progression. This Mus musculus (Mouse) protein is NEDD8-activating enzyme E1 catalytic subunit (Uba3).